We begin with the raw amino-acid sequence, 360 residues long: Sorbitol dehydrogenase (360 aa).

Cys-42 contacts Zn(2+). Residue Tyr-48 participates in substrate binding. Residues His-67 and Glu-68 each contribute to the Zn(2+) site. Glu-153 is a substrate binding site. Residues Asp-201, Arg-206, 277-279 (AGN), and 301-303 (SFR) each bind NAD(+). The substrate site is built by Arg-303 and Tyr-304.

The protein belongs to the zinc-containing alcohol dehydrogenase family. Homotetramer. Zn(2+) is required as a cofactor.

It catalyses the reaction keto-D-fructose + NADH + H(+) = D-sorbitol + NAD(+). Functionally, polyol dehydrogenase that catalyzes the reversible NAD(+)-dependent oxidation of various sugar alcohols. Is active with D-sorbitol (D-glucitol) as substrate, leading to the C2-oxidized product D-fructose. Suppresses growth arrest induced by a p53 tumor mutant in fission yeast. This Schizosaccharomyces pombe (strain 972 / ATCC 24843) (Fission yeast) protein is Sorbitol dehydrogenase (tms1).